A 323-amino-acid polypeptide reads, in one-letter code: Penicillopepsin-1 (323 aa).

The O-linked (Man...) serine glycan is linked to Ser-3. The O-linked (Man...) threonine glycan is linked to Thr-7. Residues Tyr-17–Ala-320 form the Peptidase A1 domain. Residues Asp-33 and Asp-213 contribute to the active site. A disulfide bridge connects residues Cys-249 and Cys-283.

The protein belongs to the peptidase A1 family. Monomer.

Its subcellular location is the secreted. It catalyses the reaction Hydrolysis of proteins with broad specificity similar to that of pepsin A, preferring hydrophobic residues at P1 and P1', but also cleaving 20-Gly-|-Glu-21 in the B chain of insulin. Clots milk, and activates trypsinogen.. Its function is as follows. Secreted aspartic endopeptidase that allows assimilation of proteinaceous substrates. The scissile peptide bond is attacked by a nucleophilic water molecule activated by two aspartic residues in the active site. Shows a broad primary substrate specificity. Favors hydrophobic residues at the P1 and P1' positions, but can also activate trypsinogen and hydrolyze the B chain of insulin between positions 'Gly-20' and 'Glu-21'. The polypeptide is Penicillopepsin-1 (Penicillium janthinellum (Penicillium vitale)).